Here is a 190-residue protein sequence, read N- to C-terminus: MTVGVLALQGDFREHCAVLRRIGVEPIEVRLPHQLAQVDHLIIPGGESTTIGRLLAIYQMLEPIRTRGGCDLAIWGTCAGAILLANEVMDQKQGGQPTLGLMNLTIRRNAYGSQLDSFEAPITMPIIGEEPLPGVFIRAPQIMALGQGCEAVGWLEDGSVVAARQGRLLATTFHPELTHDDRVHRLFLEL.

Position 46-48 (46-48 (GES)) interacts with L-glutamine. Cys-78 functions as the Nucleophile in the catalytic mechanism. Residues Arg-108 and 137 to 138 (IR) contribute to the L-glutamine site. Catalysis depends on charge relay system residues His-174 and Glu-176.

The protein belongs to the glutaminase PdxT/SNO family. As to quaternary structure, in the presence of PdxS, forms a dodecamer of heterodimers. Only shows activity in the heterodimer.

The enzyme catalyses aldehydo-D-ribose 5-phosphate + D-glyceraldehyde 3-phosphate + L-glutamine = pyridoxal 5'-phosphate + L-glutamate + phosphate + 3 H2O + H(+). It catalyses the reaction L-glutamine + H2O = L-glutamate + NH4(+). It participates in cofactor biosynthesis; pyridoxal 5'-phosphate biosynthesis. Functionally, catalyzes the hydrolysis of glutamine to glutamate and ammonia as part of the biosynthesis of pyridoxal 5'-phosphate. The resulting ammonia molecule is channeled to the active site of PdxS. The polypeptide is Pyridoxal 5'-phosphate synthase subunit PdxT (Chloroflexus aggregans (strain MD-66 / DSM 9485)).